A 1448-amino-acid chain; its full sequence is Glutamate receptor ionotropic, NMDA 2B (1448 aa).

The N-terminal stretch at 1 to 24 is a signal peptide; the sequence is MRPTEACCYLKISLIILFYMGCYA. Topologically, residues 25 to 554 are extracellular; it reads QKHPNMDIAV…SAFLEPFSAD (530 aa). A disulfide bridge connects residues Cys-81 and Cys-316. His-122 and Glu-279 together coordinate Zn(2+). N-linked (GlcNAc...) asparagine glycosylation is present at Asn-336. 2 disulfides stabilise this stretch: Cys-426–Cys-453 and Cys-433–Cys-454. L-glutamate-binding residues include Thr-511 and Arg-516. The chain crosses the membrane as a helical span at residues 555–573; it reads VWVMMFVMLLIVSAVAVFV. The Cytoplasmic segment spans residues 574 to 600; it reads FEYFSPVGYNRCLADGREPGGPSFTIG. Positions 601-620 form an intramembrane region, discontinuously helical; that stretch reads KAIWLLWGLVFNNSVPVQNP. Positions 601-620 are pore-forming; the sequence is KAIWLLWGLVFNNSVPVQNP. At 621 to 627 the chain is on the cytoplasmic side; the sequence is KGTTSKI. Residues 628–643 form a helical membrane-spanning segment; it reads MVSVWAFFAVIFLASY. Over 644 to 819 the chain is Extracellular; the sequence is TANLAAFMIQ…LDIDNMAGVF (176 aa). An N-linked (GlcNAc...) asparagine glycan is attached at Asn-685. L-glutamate-binding positions include 687-688 and Asp-729; that span reads ST. A disulfide bridge links Cys-743 with Cys-798. A helical membrane pass occupies residues 820-839; it reads YMLAAAMALSLITFIMEHLF. The Cytoplasmic segment spans residues 840–1448; sequence FWQLRHCFMG…EKLSSIESDV (609 aa). The segment covering 1254–1265 has biased composition (polar residues); the sequence is APNSKYPQSPNG. The interval 1254 to 1277 is disordered; that stretch reads APNSKYPQSPNGKAQKRNRSKLHR. Basic residues predominate over residues 1267–1277; it reads AQKRNRSKLHR.

The protein belongs to the glutamate-gated ion channel (TC 1.A.10.1) family. NR2B/GRIN2B subfamily. As to quaternary structure, heterotetramer. Forms heterotetrameric channels composed of two GluN1/zeta subunits (GRIN1), and two identical GluN2/epsilon subunits (GRIN2A, GRIN2B, GRIN2C or GRIN2D) or GluN3 subunits (GRIN3A or GRIN3B) (in vitro). In vivo, the subunit composition may depend on the expression levels of the different subunits. As to expression, detected in oocytes.

It localises to the cell membrane. The protein localises to the postsynaptic cell membrane. It catalyses the reaction Ca(2+)(in) = Ca(2+)(out). The enzyme catalyses Na(+)(in) = Na(+)(out). It carries out the reaction K(+)(in) = K(+)(out). Component of N-methyl-D-aspartate (NMDA) receptors (NMDARs) that function as heterotetrameric, ligand-gated cation channels with high calcium permeability and voltage-dependent block by Mg(2+). Channel activation requires binding of the neurotransmitter L-glutamate to the GluN2 subunit, glycine binding to the GluN1 subunit, plus membrane depolarization to eliminate channel inhibition by Mg(2+). NMDARs mediate simultaneously the potasium efflux and the influx of calcium and sodium. Each GluN2 subunit confers differential attributes to channel properties, including activation, deactivation and desensitization kinetics, pH sensitivity, Ca2(+) permeability, and binding to allosteric modulators. The protein is Glutamate receptor ionotropic, NMDA 2B of Xenopus laevis (African clawed frog).